The chain runs to 2103 residues: Zinc finger SWIM domain-containing protein 8 homolog (2103 aa).

The segment at 191 to 227 (FNVAVTFDRRRISSCNCTCTSSAYWCSHVVAVCLHRI) adopts an SWIM-type zinc-finger fold. Disordered regions lie at residues 684 to 860 (DGNR…GSTA), 1237 to 1262 (SSNP…GGSG), 1310 to 1399 (SSGS…IPNQ), 1735 to 1772 (MQMF…QVVQ), 1786 to 1864 (QQVQ…GVGV), and 1888 to 1916 (PFMQ…RQPH). Residues 724 to 740 (SALTESDSQSSFDAVSH) are compositionally biased toward polar residues. Low complexity-rich tracts occupy residues 754–789 (AVGV…STSS) and 835–857 (GRVA…VGSG). Residues 1237-1249 (SSNPPVRTRSNQP) show a composition bias toward polar residues. Positions 1320–1351 (GMVPTTNAAGTTGTPSSSSTTVSGSQNPNGNP) are enriched in low complexity. A compositionally biased stretch (gly residues) spans 1352 to 1377 (SGSGGGGNGGGGNGGGGGGGGGGGGS). The span at 1755–1764 (QPPPQQPPNP) shows a compositional bias: pro residues. Low complexity-rich tracts occupy residues 1786–1813 (QQVQ…SGFQ) and 1820–1835 (AFQA…MQAG). 2 stretches are compositionally biased toward pro residues: residues 1836 to 1859 (PPGP…PNGP) and 1894 to 1908 (PPQP…PSQP).

Belongs to the ZSWIM8 family. Component of the SCF-like E3 ubiquitin-protein ligase complex.

It functions in the pathway protein modification; protein ubiquitination. Functionally, substrate recognition component of a SCF-like E3 ubiquitin-protein ligase complex that promotes target-directed microRNA degradation (TDMD), a process that mediates degradation of microRNAs (miRNAs). The SCF-like E3 ubiquitin-protein ligase complex acts by catalyzing ubiquitination and subsequent degradation of AGO1, thereby exposing miRNAs for degradation. This is Zinc finger SWIM domain-containing protein 8 homolog from Drosophila melanogaster (Fruit fly).